Reading from the N-terminus, the 523-residue chain is 2-isopropylmalate synthase (523 aa).

Residues 5–267 (VIIFDTTLRD…ETGINAKEIH (263 aa)) form the Pyruvate carboxyltransferase domain. Mn(2+) is bound by residues Asp-14, His-202, His-204, and Asn-238. Residues 392 to 523 (ELQQLVVHSD…QQNKQEFGSV (132 aa)) are regulatory domain.

This sequence belongs to the alpha-IPM synthase/homocitrate synthase family. LeuA type 1 subfamily. As to quaternary structure, homodimer. Mn(2+) serves as cofactor.

The protein localises to the cytoplasm. It catalyses the reaction 3-methyl-2-oxobutanoate + acetyl-CoA + H2O = (2S)-2-isopropylmalate + CoA + H(+). The protein operates within amino-acid biosynthesis; L-leucine biosynthesis; L-leucine from 3-methyl-2-oxobutanoate: step 1/4. In terms of biological role, catalyzes the condensation of the acetyl group of acetyl-CoA with 3-methyl-2-oxobutanoate (2-ketoisovalerate) to form 3-carboxy-3-hydroxy-4-methylpentanoate (2-isopropylmalate). This is 2-isopropylmalate synthase from Shewanella halifaxensis (strain HAW-EB4).